The sequence spans 74 residues: Large ribosomal subunit protein uL14c (74 aa).

The protein belongs to the universal ribosomal protein uL14 family. In terms of assembly, part of the 50S ribosomal subunit.

The protein localises to the plastid. It localises to the chloroplast. Functionally, binds to 23S rRNA. The sequence is that of Large ribosomal subunit protein uL14c (rpl14) from Oenothera ammophila (Evening primerose).